We begin with the raw amino-acid sequence, 752 residues long: BCLAF1 and THRAP3 family member 3 (752 aa).

Over residues Met1–Gln13 the composition is skewed to basic residues. Disordered stretches follow at residues Met1–Thr114, Pro132–Leu177, and Asp190–Arg252. Phosphoserine occurs at positions 15 and 17. The span at Phe23–Gly57 shows a compositional bias: basic and acidic residues. Ser78 and Ser80 each carry phosphoserine. The span at Pro85–Ser109 shows a compositional bias: basic and acidic residues. Positions Asp190–Glu199 are enriched in basic and acidic residues. A Phosphoserine modification is found at Ser205. Basic and acidic residues-rich tracts occupy residues Arg222 to Lys231 and Arg238 to Arg252. Residue Lys416 forms a Glycyl lysine isopeptide (Lys-Gly) (interchain with G-Cter in SUMO2) linkage. The residue at position 592 (Ser592) is a Phosphoserine.

It belongs to the BCLAF1/THRAP3 family.

The protein localises to the mitochondrion. This is BCLAF1 and THRAP3 family member 3 from Mus musculus (Mouse).